A 116-amino-acid chain; its full sequence is MFGYMEISVRVEIGKQNSRIHKLELWKLMEEGLHTLMKEEKLDIMLKEEANFGFCRWLNTRGNWLYLEDMRKPILIEFQNFFNCLNYPSRVYKLTVQNNDYKLGSIRDLRIKLFFF.

The chain is Protein alpha-2 (alpha) from Bos taurus (Bovine).